The sequence spans 220 residues: tRNA (guanine-N(7)-)-methyltransferase (220 aa).

The S-adenosyl-L-methionine site is built by Glu-42, Glu-67, and Asp-122. The active site involves Asp-122. Substrate-binding positions include Lys-126, Asp-158, and 198-201; that span reads TEYE.

This sequence belongs to the class I-like SAM-binding methyltransferase superfamily. TrmB family.

The catalysed reaction is guanosine(46) in tRNA + S-adenosyl-L-methionine = N(7)-methylguanosine(46) in tRNA + S-adenosyl-L-homocysteine. It participates in tRNA modification; N(7)-methylguanine-tRNA biosynthesis. Functionally, catalyzes the formation of N(7)-methylguanine at position 46 (m7G46) in tRNA. In Mycoplasma capricolum subsp. capricolum (strain California kid / ATCC 27343 / NCTC 10154), this protein is tRNA (guanine-N(7)-)-methyltransferase.